An 851-amino-acid chain; its full sequence is Beta-galactosidase BoGH2A (851 aa).

An N-terminal signal peptide occupies residues 1–19; sequence MMIGKLKYLMLGGCLILGS. C20 carries the N-palmitoyl cysteine lipid modification. A lipid anchor (S-diacylglycerol cysteine) is attached at C20. Residue E437 is the Proton donor of the active site. Residue E544 is the Nucleophile of the active site.

The protein belongs to the glycosyl hydrolase 2 family.

The protein localises to the cell inner membrane. The enzyme catalyses Hydrolysis of terminal non-reducing beta-D-galactose residues in beta-D-galactosides.. It functions in the pathway glucan metabolism; xyloglucan degradation. Catalyzes the hydrolysis of terminal non-reducing beta-D-galactose residues in beta-D-galactosides in xyloglucan degradation, converting 'L' units to 'X' units. In Bacteroides ovatus (strain ATCC 8483 / DSM 1896 / JCM 5824 / BCRC 10623 / CCUG 4943 / NCTC 11153), this protein is Beta-galactosidase BoGH2A.